The chain runs to 131 residues: Glycine cleavage system H protein (131 aa).

Positions 24-106 constitute a Lipoyl-binding domain; the sequence is IATIGISAFA…YGEGWLLKLR (83 aa). Residue lysine 65 is modified to N6-lipoyllysine.

The protein belongs to the GcvH family. In terms of assembly, the glycine cleavage system is composed of four proteins: P, T, L and H. (R)-lipoate serves as cofactor.

Functionally, the glycine cleavage system catalyzes the degradation of glycine. The H protein shuttles the methylamine group of glycine from the P protein to the T protein. This is Glycine cleavage system H protein from Gloeothece citriformis (strain PCC 7424) (Cyanothece sp. (strain PCC 7424)).